A 416-amino-acid polypeptide reads, in one-letter code: UDP-N-acetylmuramoylalanine--D-glutamate ligase (416 aa).

Residue 108 to 114 participates in ATP binding; that stretch reads GTTGKTT.

It belongs to the MurCDEF family.

The protein localises to the cytoplasm. It carries out the reaction UDP-N-acetyl-alpha-D-muramoyl-L-alanine + D-glutamate + ATP = UDP-N-acetyl-alpha-D-muramoyl-L-alanyl-D-glutamate + ADP + phosphate + H(+). It functions in the pathway cell wall biogenesis; peptidoglycan biosynthesis. Functionally, cell wall formation. Catalyzes the addition of glutamate to the nucleotide precursor UDP-N-acetylmuramoyl-L-alanine (UMA). The chain is UDP-N-acetylmuramoylalanine--D-glutamate ligase from Chlamydia trachomatis serovar L2 (strain ATCC VR-902B / DSM 19102 / 434/Bu).